The following is a 387-amino-acid chain: MTSTPTALSIAQDLLRCPSVTPADAGALDVLETLLKGAGFTVHRVTFSEPGTADIDNLYARIGNTSPHLCFAGHTDVVPPGDASAWTHGAFAGDVADGLLYGRGAVDMKGGIACAVAATLDYLAANGGQPKGSISFLITGDEEDVAVNGTVKLLQWAAERGEQFDHCIVGEPSNVETIGDTIKIGRRGSQSGVLIVDGVQGHVAYPHRAANPVPDIAKLITALNDEPLDHGSAQFQPSNLEFTSVDVGNPATNVIPAQARAKFNIRFNDHHTQETLKALVEHRLVAACGNRIRAHIEWLPSNADVFVTKPGAFTDLVGAAIAEVTRRTPELNTGGGTSDARFIAKYCQVVEFGLVGQTMHQIDERTPVSDLDKLTAIYRGVLERYFK.

Zn(2+) is bound at residue His-74. The active site involves Asp-76. Residue Asp-107 coordinates Zn(2+). The active-site Proton acceptor is the Glu-142. Residues Glu-143, Glu-171, and His-360 each contribute to the Zn(2+) site.

The protein belongs to the peptidase M20A family. DapE subfamily. As to quaternary structure, homodimer. Requires Zn(2+) as cofactor. The cofactor is Co(2+).

The enzyme catalyses N-succinyl-(2S,6S)-2,6-diaminopimelate + H2O = (2S,6S)-2,6-diaminopimelate + succinate. The protein operates within amino-acid biosynthesis; L-lysine biosynthesis via DAP pathway; LL-2,6-diaminopimelate from (S)-tetrahydrodipicolinate (succinylase route): step 3/3. Catalyzes the hydrolysis of N-succinyl-L,L-diaminopimelic acid (SDAP), forming succinate and LL-2,6-diaminopimelate (DAP), an intermediate involved in the bacterial biosynthesis of lysine and meso-diaminopimelic acid, an essential component of bacterial cell walls. The chain is Succinyl-diaminopimelate desuccinylase from Rhodopseudomonas palustris (strain ATCC BAA-98 / CGA009).